The primary structure comprises 443 residues: Serine/threonine-protein phosphatase 2A 55 kDa regulatory subunit B beta isoform (443 aa).

4 WD repeats span residues 22–61 (TEAD…KNQV), 87–128 (EIEE…KRPE), 171–209 (AHTY…QSFN), and 220–260 (ELTE…LCDR). S275 carries the phosphoserine modification. WD repeat units follow at residues 279 to 317 (EIIS…RPVE), 334 to 375 (ENDC…DVTL), and 410 to 442 (DFSK…QDKV). Residue Y295 is modified to Phosphotyrosine. Position 298 is a phosphothreonine (T298).

The protein belongs to the phosphatase 2A regulatory subunit B family. In terms of assembly, PP2A consists of a common heterodimeric core enzyme, composed of a 36 kDa catalytic subunit (subunit C) and a 65 kDa constant regulatory subunit (PR65 or subunit A), that associates with a variety of regulatory subunits. Proteins that associate with the core dimer include three families of regulatory subunits B (the R2/B/PR55/B55, R3/B''/PR72/PR130/PR59 and R5/B'/B56 families), the 48 kDa variable regulatory subunit, viral proteins, and cell signaling molecules. Interacts with IER5 (via N- and C-terminal regions). Interacts with TOMM22. In terms of tissue distribution, expressed in the brain. Isoform 1 and isoform 2 are expressed in the forbrain. Isoform 1 is more strongly expressed than isoform 2 in the olfactory bulb. Isoform 1 and isoform 2 are weakly expressed in the cerebellum. Isoform 1 is expressed in the testis. Isoform 2 expression is undetectable at birth rising to adult level at day 14.

It is found in the cytoplasm. It localises to the cytoskeleton. Its subcellular location is the membrane. The protein resides in the mitochondrion. The protein localises to the mitochondrion outer membrane. Functionally, the B regulatory subunit might modulate substrate selectivity and catalytic activity, and might also direct the localization of the catalytic enzyme to a particular subcellular compartment. Within the PP2A holoenzyme complex, isoform 2 is required to promote proapoptotic activity. Isoform 2 regulates neuronal survival through the mitochondrial fission and fusion balance. The protein is Serine/threonine-protein phosphatase 2A 55 kDa regulatory subunit B beta isoform (Ppp2r2b) of Rattus norvegicus (Rat).